The sequence spans 41 residues: Tachystatin-C (41 aa).

Disulfide bonds link C12–C28, C19–C33, and C27–C38.

Granular hemocytes, small secretory granules.

It is found in the secreted. Its function is as follows. Binds to chitin. Shows strong activity against E.coli (IC(50) is 1.2 ug/ml). Is also very active against S.aureus (IC(50) is 0.8 ug/ml), C.albicans (IC(50) is 0.9 ug/ml) and P.pastoris (IC(50) is 0.3 ug/ml). Binds to chitin (5.2 uM are required to obtain 50% of binding). Causes hemolysis on sheep erythrocytes, probably by forming ion-permeable pores. The sequence is that of Tachystatin-C from Tachypleus tridentatus (Japanese horseshoe crab).